Here is a 141-residue protein sequence, read N- to C-terminus: Keratin-associated protein 19-2 (141 aa).

Positions 5–135 (SGYSGGLGYG…CRRSSCCGGY (131 aa)) are 48 X 2 AA repeats of G-[YCGS].

Belongs to the KRTAP type 19 family. As to quaternary structure, interacts with hair keratins. As to expression, strong expression in narrowly defined pattern restricted to the lower and middle cortical regions of the hair shaft in both developing and cycling hair. During hair follicle regression (catagen), expression levels decrease until expression is no longer detectable in follicles at resting stage (telogen).

In the hair cortex, hair keratin intermediate filaments are embedded in an interfilamentous matrix, consisting of hair keratin-associated proteins (KRTAP), which are essential for the formation of a rigid and resistant hair shaft through their extensive disulfide bond cross-linking with abundant cysteine residues of hair keratins. The matrix proteins include the high-sulfur and high-glycine-tyrosine keratins. In Mus musculus (Mouse), this protein is Keratin-associated protein 19-2 (Krtap19-2).